The primary structure comprises 392 residues: Antitrypsin (392 aa).

An N-terminal signal peptide occupies residues 1 to 16; the sequence is MKTIICLFTIAIAAMA.

This sequence belongs to the serpin family. As to expression, hemolymph.

The protein localises to the secreted. Functionally, may play a role in the prophenoloxidase activating system in the silkworm hemolymph. This chain is Antitrypsin, found in Bombyx mori (Silk moth).